Here is a 156-residue protein sequence, read N- to C-terminus: 6,7-dimethyl-8-ribityllumazine synthase (156 aa).

5-amino-6-(D-ribitylamino)uracil-binding positions include F22, 57 to 59, and 81 to 83; these read AYE and SVI. 86–87 contributes to the (2S)-2-hydroxy-3-oxobutyl phosphate binding site; that stretch reads GT. H89 (proton donor) is an active-site residue. F114 provides a ligand contact to 5-amino-6-(D-ribitylamino)uracil. R128 lines the (2S)-2-hydroxy-3-oxobutyl phosphate pocket.

The protein belongs to the DMRL synthase family. In terms of assembly, forms an icosahedral capsid composed of 60 subunits, arranged as a dodecamer of pentamers.

The catalysed reaction is (2S)-2-hydroxy-3-oxobutyl phosphate + 5-amino-6-(D-ribitylamino)uracil = 6,7-dimethyl-8-(1-D-ribityl)lumazine + phosphate + 2 H2O + H(+). It functions in the pathway cofactor biosynthesis; riboflavin biosynthesis; riboflavin from 2-hydroxy-3-oxobutyl phosphate and 5-amino-6-(D-ribitylamino)uracil: step 1/2. Functionally, catalyzes the formation of 6,7-dimethyl-8-ribityllumazine by condensation of 5-amino-6-(D-ribitylamino)uracil with 3,4-dihydroxy-2-butanone 4-phosphate. This is the penultimate step in the biosynthesis of riboflavin. In Photobacterium leiognathi, this protein is 6,7-dimethyl-8-ribityllumazine synthase.